A 347-amino-acid chain; its full sequence is Gas vesicle ATPase GvpN (347 aa).

Residues Met-1–Thr-50 form a disordered region. A compositionally biased stretch (basic and acidic residues) spans Ser-18–Gln-42. Gly-91–Thr-98 serves as a coordination point for ATP.

The protein belongs to the CbbQ/NirQ/NorQ/GpvN family. As to quaternary structure, forms homodimers, a GvpN-GvpO heterodimer, interacts with GvpC and GvpL, might interact with GvpA.

Its subcellular location is the gas vesicle. It localises to the cytoplasm. The enzyme catalyses ATP + H2O = ADP + phosphate + H(+). An ATPase that functions in gas vesicle formation. A minor component of the gas vesicle, also found in soluble extracts. Gas vesicles are hollow, gas filled proteinaceous nanostructures found in some microorganisms. They allow positioning of halobacteria at the optimal depth for growth in the poorly aerated, shallow brine pools of their habitat. Its function is as follows. Expression of a 9.5 kb mc-vac DNA fragment containing 2 divergently transcribed regions (gvpD-gvpE-gvpF-gvpG-gvpH-gvpI-gvpJ-gvpK-gvpL-gvpM and gvpA-gvpC-gvpN-gvpO) allows H.volcanii to produce gas vesicles. This chain is Gas vesicle ATPase GvpN, found in Haloferax mediterranei (strain ATCC 33500 / DSM 1411 / JCM 8866 / NBRC 14739 / NCIMB 2177 / R-4) (Halobacterium mediterranei).